The primary structure comprises 543 residues: EH domain-containing protein 2 (543 aa).

2 positions are modified to phosphoserine: S3 and S44. The region spanning 55–286 is the Dynamin-type G domain; it reads FDGKPMVLVA…DLFRDIQGLP (232 aa). Residues 65–72 are G1 motif; that stretch reads GQYSTGKT. 65–72 contacts ATP; sequence GQYSTGKT. Residues 91 to 92 form a G2 motif region; sequence EP. A G3 motif region spans residues 153-156; it reads DTPG. A G4 motif region spans residues 219–222; the sequence is NKAD. K220 is a binding site for ATP. A region of interest (G5 motif) is located at residue V243. An ATP-binding site is contributed by W258. The segment at 320 to 340 is mediates membrane-binding; sequence TVFGKENKKKQLILKLPVIFA. Residues S438, S468, S470, S484, and S493 each carry the phosphoserine modification. One can recognise an EH domain in the interval 449–537; it reads DKSKYDEIFY…RRLVPPSKRR (89 aa). The EF-hand domain maps to 481–516; that stretch reads LPNSVLGRIWKLSDVDRDGMLDDEEFALASHLIEAK. The Ca(2+) site is built by D494, D496, D498, M500, and E505. The interval 521-543 is disordered; that stretch reads GLPTNLPRRLVPPSKRRQKGSAE. Basic residues predominate over residues 534-543; sequence SKRRQKGSAE.

It belongs to the TRAFAC class dynamin-like GTPase superfamily. Dynamin/Fzo/YdjA family. EHD subfamily. As to quaternary structure, homodimer and homooligomer. Interacts with EHD1. May also interact with EHD3 and EHD4. Interacts with MYOF. Interacts with EHBP1. Interacts with FER1L5 (via second C2 domain). Interacts with CAV1 in a cholesterol-dependent manner. Interacts (via EH domain) with PACSIN2 (via NPF motifs); this interaction probably stabilizes the caveolae. Detected in lung and adipocytes. Detected at lower levels in heart and skeletal muscle.

It localises to the cell membrane. Its subcellular location is the membrane. The protein localises to the caveola. It is found in the endosome membrane. The protein resides in the cytoplasm. It localises to the cytosol. Its activity is regulated as follows. The very low intrinsic ATPase activity is increased upon interaction with liposomes. ATP- and membrane-binding protein that controls membrane reorganization/tubulation upon ATP hydrolysis. Plays a role in membrane trafficking between the plasma membrane and endosomes. Important for the internalization of GLUT4. Required for fusion of myoblasts to skeletal muscle myotubes. Required for normal translocation of FER1L5 to the plasma membrane. Regulates the equilibrium between cell surface-associated and cell surface-dissociated caveolae by constraining caveolae at the cell membrane. The protein is EH domain-containing protein 2 of Mus musculus (Mouse).